A 521-amino-acid chain; its full sequence is Bifunctional purine biosynthesis protein PurH (521 aa).

Residues 1 to 147 (MAVIKRALIS…KNNRDVTVVV (147 aa)) form the MGS-like domain.

It belongs to the PurH family.

It carries out the reaction (6R)-10-formyltetrahydrofolate + 5-amino-1-(5-phospho-beta-D-ribosyl)imidazole-4-carboxamide = 5-formamido-1-(5-phospho-D-ribosyl)imidazole-4-carboxamide + (6S)-5,6,7,8-tetrahydrofolate. It catalyses the reaction IMP + H2O = 5-formamido-1-(5-phospho-D-ribosyl)imidazole-4-carboxamide. Its pathway is purine metabolism; IMP biosynthesis via de novo pathway; 5-formamido-1-(5-phospho-D-ribosyl)imidazole-4-carboxamide from 5-amino-1-(5-phospho-D-ribosyl)imidazole-4-carboxamide (10-formyl THF route): step 1/1. The protein operates within purine metabolism; IMP biosynthesis via de novo pathway; IMP from 5-formamido-1-(5-phospho-D-ribosyl)imidazole-4-carboxamide: step 1/1. The sequence is that of Bifunctional purine biosynthesis protein PurH from Syntrophotalea carbinolica (strain DSM 2380 / NBRC 103641 / GraBd1) (Pelobacter carbinolicus).